A 742-amino-acid polypeptide reads, in one-letter code: Synaptic vesicle glycoprotein 2A (742 aa).

The tract at residues M1–D57 is interaction with SYT1. At M1–Y169 the chain is on the cytoplasmic side. Basic and acidic residues predominate over residues E40–F49. A disordered region spans residues E40–R145. 2 positions are modified to phosphoserine: S80 and S81. T84 carries the post-translational modification Phosphothreonine. Positions V122 to G137 are enriched in gly residues. Phosphoserine is present on S127. The helical transmembrane segment at F170 to L190 threads the bilayer. Residues P191 to G205 are Extracellular-facing. The helical transmembrane segment at M206 to A226 threads the bilayer. The Cytoplasmic segment spans residues D227 to Q233. A helical transmembrane segment spans residues C234–G254. At Y255 to R262 the chain is on the extracellular side. A helical transmembrane segment spans residues L263–F283. Residues L284–S294 lie on the Cytoplasmic side of the membrane. The helical transmembrane segment at W295–I315 threads the bilayer. Topologically, residues P316–R334 are extracellular. A helical membrane pass occupies residues V335–P355. Topologically, residues E356–T447 are cytoplasmic. S393 carries the post-translational modification Phosphoserine. The chain crosses the membrane as a helical span at residues L448 to F468. Topologically, residues P469–Y598 are extracellular. Y480 is modified (phosphotyrosine). N498 and N548 each carry an N-linked (GlcNAc...) asparagine glycan. N-linked (GlcNAc...) asparagine; alternate glycosylation is present at N573. N573 is a glycosylation site (N-linked (HexNAc...) asparagine; alternate). Residues F599–M619 form a helical membrane-spanning segment. The Cytoplasmic portion of the chain corresponds to D620–R626. The chain crosses the membrane as a helical span at residues M627–S647. The Extracellular portion of the chain corresponds to E648–M651. Residues I652–L672 form a helical membrane-spanning segment. Residues T673 to A685 lie on the Cytoplasmic side of the membrane. The chain crosses the membrane as a helical span at residues F686–V708. The Extracellular portion of the chain corresponds to G709–K712. A helical transmembrane segment spans residues A713 to L731. Over K732–Q742 the chain is Cytoplasmic.

The protein belongs to the major facilitator superfamily. Interacts with SYT1/synaptotagmin-1 in a calcium-dependent manner. Binds the adapter protein complex AP-2. As to quaternary structure, (Microbial infection) Interacts with C.botulinum neurotoxin type A1 and type A2 (BoNT/A, botA). Interaction is improved by glycosylation of SV2. In terms of assembly, (Microbial infection) Copurifies with C.botulinum neurotoxin type B (BoNT/B, botB) and synaptotagmin 1 (SYT1). Interaction does not require glycosylation of SV2 or SYT1 proteins. Another group finds only copurification with SYT1 and SYT2. (Microbial infection) Interacts with C.botulinum neurotoxin type E (BoNT/E). Interaction requires glycosylation of SV2 proteins. As to quaternary structure, (Microbial infection) Copurifies with C.botulinum neurotoxin type F (BoNT/F) and synaptotagmin 1 (SYT2). Another group finds only copurification with BoNT/F. Interaction requires SV2 glycosylation. In terms of processing, phosphorylation by CK1 of the N-terminal cytoplasmic domain regulates interaction with SYT1. N-glycosylated, on at least 3 residues. As to expression, widely expressed throughout the brain (at protein level). Expressed by neural and endocrine cells of brain and spinal cord.

It localises to the presynapse. Its subcellular location is the cytoplasmic vesicle. It is found in the secretory vesicle. The protein resides in the synaptic vesicle membrane. Functionally, plays a role in the control of regulated secretion in neural and endocrine cells, enhancing selectively low-frequency neurotransmission. Positively regulates vesicle fusion by maintaining the readily releasable pool of secretory vesicles. (Microbial infection) Receptor for C.botulinum neurotoxin type A (BoNT/A, botA); the toxin binds via extracellular loop 4. Restores uptake of BoNT/A in mouse cells that are deleted for SV2 receptor. Glycosylation of Asn-573 is not essential for receptor activity, but enhances uptake. Also serves as a receptor for the closely related C.botulinum neurotoxin type A2; glycosylation is not essential but enhances the interaction. Its function is as follows. Possible receptor for C.botulinum neurotoxin type D (BoNT/D, botD); BoNT/D does not bind to extracellular loop 4 as do BoNT/A and BoNT/E, nor to loop 1 or loop 3. Another group does not find a convincing interaction with SV2. In terms of biological role, (Microbial infection) Receptor for C.botulinum neurotoxin type E (BoNT/E); the toxin probably binds via extracellular loop 4 and requires glycosylation of Asn-573. Restores uptake of BoNT/E in mouse cells that are deleted for SV2 receptor. Functionally, (Microbial infection) Receptor for C.botulinum neurotoxin type F (BoNT/F). Binding requires glycosylation of Asn-573. This chain is Synaptic vesicle glycoprotein 2A (Sv2a), found in Rattus norvegicus (Rat).